We begin with the raw amino-acid sequence, 317 residues long: Ribosomal RNA small subunit methyltransferase H (317 aa).

S-adenosyl-L-methionine is bound by residues 30 to 32 (GGH), Asp50, Tyr78, Asp95, and Gln102.

Belongs to the methyltransferase superfamily. RsmH family.

It localises to the cytoplasm. It carries out the reaction cytidine(1402) in 16S rRNA + S-adenosyl-L-methionine = N(4)-methylcytidine(1402) in 16S rRNA + S-adenosyl-L-homocysteine + H(+). Specifically methylates the N4 position of cytidine in position 1402 (C1402) of 16S rRNA. The sequence is that of Ribosomal RNA small subunit methyltransferase H from Nitrosomonas eutropha (strain DSM 101675 / C91 / Nm57).